Consider the following 674-residue polypeptide: DNA ligase (674 aa).

Residues Asp34–Asp38, Ser84–Leu85, and Glu116 each bind NAD(+). Catalysis depends on Lys118, which acts as the N6-AMP-lysine intermediate. The NAD(+) site is built by Arg139, Glu174, Lys291, and Lys315. Zn(2+)-binding residues include Cys409, Cys412, Cys425, and Cys430. The region spanning Arg586 to Ser674 is the BRCT domain.

Belongs to the NAD-dependent DNA ligase family. LigA subfamily. Requires Mg(2+) as cofactor. It depends on Mn(2+) as a cofactor.

The enzyme catalyses NAD(+) + (deoxyribonucleotide)n-3'-hydroxyl + 5'-phospho-(deoxyribonucleotide)m = (deoxyribonucleotide)n+m + AMP + beta-nicotinamide D-nucleotide.. Functionally, DNA ligase that catalyzes the formation of phosphodiester linkages between 5'-phosphoryl and 3'-hydroxyl groups in double-stranded DNA using NAD as a coenzyme and as the energy source for the reaction. It is essential for DNA replication and repair of damaged DNA. In Thermus scotoductus, this protein is DNA ligase.